A 372-amino-acid polypeptide reads, in one-letter code: DNA replication and repair protein RecF (372 aa).

30-37 (GENAQGKT) contacts ATP.

Belongs to the RecF family.

The protein localises to the cytoplasm. The RecF protein is involved in DNA metabolism; it is required for DNA replication and normal SOS inducibility. RecF binds preferentially to single-stranded, linear DNA. It also seems to bind ATP. This is DNA replication and repair protein RecF from Geobacillus kaustophilus (strain HTA426).